Here is a 340-residue protein sequence, read N- to C-terminus: Glyceraldehyde-3-phosphate dehydrogenase (340 aa).

NAD(+) is bound by residues 11–12 (SI) and glycine 111. Position 140–142 (140–142 (SCN)) interacts with D-glyceraldehyde 3-phosphate. The Nucleophile role is filled by cysteine 141. Residue arginine 169 coordinates NAD(+). 195–196 (HG) contributes to the D-glyceraldehyde 3-phosphate binding site. Glutamine 303 lines the NAD(+) pocket.

This sequence belongs to the glyceraldehyde-3-phosphate dehydrogenase family. As to quaternary structure, homotetramer.

The protein resides in the cytoplasm. The catalysed reaction is D-glyceraldehyde 3-phosphate + phosphate + NADP(+) = (2R)-3-phospho-glyceroyl phosphate + NADPH + H(+). It carries out the reaction D-glyceraldehyde 3-phosphate + phosphate + NAD(+) = (2R)-3-phospho-glyceroyl phosphate + NADH + H(+). Its pathway is carbohydrate degradation; glycolysis; pyruvate from D-glyceraldehyde 3-phosphate: step 1/5. In Methanococcus maripaludis (strain C7 / ATCC BAA-1331), this protein is Glyceraldehyde-3-phosphate dehydrogenase.